The primary structure comprises 601 residues: 4-hydroxy-3-methylbut-2-en-1-yl diphosphate synthase (flavodoxin) (601 aa).

4 residues coordinate [4Fe-4S] cluster: Cys-507, Cys-510, Cys-542, and Glu-549.

It belongs to the IspG family. Requires [4Fe-4S] cluster as cofactor.

The catalysed reaction is (2E)-4-hydroxy-3-methylbut-2-enyl diphosphate + oxidized [flavodoxin] + H2O + 2 H(+) = 2-C-methyl-D-erythritol 2,4-cyclic diphosphate + reduced [flavodoxin]. The protein operates within isoprenoid biosynthesis; isopentenyl diphosphate biosynthesis via DXP pathway; isopentenyl diphosphate from 1-deoxy-D-xylulose 5-phosphate: step 5/6. Its function is as follows. Converts 2C-methyl-D-erythritol 2,4-cyclodiphosphate (ME-2,4cPP) into 1-hydroxy-2-methyl-2-(E)-butenyl 4-diphosphate. The chain is 4-hydroxy-3-methylbut-2-en-1-yl diphosphate synthase (flavodoxin) from Chlamydia muridarum (strain MoPn / Nigg).